A 130-amino-acid polypeptide reads, in one-letter code: Protein ApaG (130 aa).

Positions 3–127 (EHESCGVRIS…FSLDRPSDRL (125 aa)) constitute an ApaG domain.

This is Protein ApaG from Maricaulis maris (strain MCS10) (Caulobacter maris).